The sequence spans 94 residues: Large ribosomal subunit protein uL23 (94 aa).

It belongs to the universal ribosomal protein uL23 family. In terms of assembly, part of the 50S ribosomal subunit. Contacts protein L29, and trigger factor when it is bound to the ribosome.

One of the early assembly proteins it binds 23S rRNA. One of the proteins that surrounds the polypeptide exit tunnel on the outside of the ribosome. Forms the main docking site for trigger factor binding to the ribosome. This Exiguobacterium sibiricum (strain DSM 17290 / CCUG 55495 / CIP 109462 / JCM 13490 / 255-15) protein is Large ribosomal subunit protein uL23.